Consider the following 121-residue polypeptide: Ribonuclease P protein component (121 aa).

The protein belongs to the RnpA family. As to quaternary structure, consists of a catalytic RNA component (M1 or rnpB) and a protein subunit.

It carries out the reaction Endonucleolytic cleavage of RNA, removing 5'-extranucleotides from tRNA precursor.. In terms of biological role, RNaseP catalyzes the removal of the 5'-leader sequence from pre-tRNA to produce the mature 5'-terminus. It can also cleave other RNA substrates such as 4.5S RNA. The protein component plays an auxiliary but essential role in vivo by binding to the 5'-leader sequence and broadening the substrate specificity of the ribozyme. The polypeptide is Ribonuclease P protein component (Nitrosomonas eutropha (strain DSM 101675 / C91 / Nm57)).